The following is a 112-amino-acid chain: Cytochrome c 2.1 (112 aa).

4 residues coordinate heme c: Cys20, Cys23, His24, and Met85.

It belongs to the cytochrome c family. In terms of processing, binds 1 heme c group covalently per subunit.

The protein localises to the mitochondrion intermembrane space. In terms of biological role, electron carrier protein. The oxidized form of the cytochrome c heme group can accept an electron from the heme group of the cytochrome c1 subunit of cytochrome reductase. Cytochrome c then transfers this electron to the cytochrome oxidase complex, the final protein carrier in the mitochondrial electron-transport chain. In Caenorhabditis briggsae, this protein is Cytochrome c 2.1.